A 258-amino-acid polypeptide reads, in one-letter code: GPI alpha-1,4-mannosyltransferase I, stabilizing subunit (258 aa).

Positions 1 to 21 (MAARVAAVRAAAWLLLGAATG) are cleaved as a signal peptide. The Lumenal segment spans residues 22-230 (LTRGPAAAFT…PVGLTVHTSL (209 aa)). N-linked (GlcNAc...) asparagine glycosylation is present at Asn103. Residues 231–251 (VCSVTLLITILCSTLILVAVF) form a helical membrane-spanning segment. The Cytoplasmic segment spans residues 252–258 (KYGHFSL).

This sequence belongs to the PIGX family. Part of the glycosylphosphatidylinositol-mannosyltransferase I complex that is composed of PIGM and PIGX. Interacts with PIGM; PIGX stabilizes PIGM.

The protein resides in the endoplasmic reticulum membrane. The protein operates within glycolipid biosynthesis; glycosylphosphatidylinositol-anchor biosynthesis. Functionally, stabilizing subunit of the glycosylphosphatidylinositol-mannosyltransferase I complex which catalyzes the transfer of the first mannose, via an alpha-1,4 bond from a dolichol-phosphate-mannose (Dol-P-Man) to the glucosaminyl acyl phosphatidylinositol (GlcN-(acyl)PI) intermediate to generate alpha-D-Man-(1-&gt;4)-alpha-D-GlcN-(1-&gt;6)-(1-radyl,2-acyl-sn-glycero-3-phospho)-2-acyl-inositol and participates in the sixth step of the glycosylphosphatidylinositol-anchor biosynthesis. Probably acts by stabilizing the mannosyltransferase PIGM. The polypeptide is GPI alpha-1,4-mannosyltransferase I, stabilizing subunit (Homo sapiens (Human)).